The sequence spans 475 residues: ATP synthase subunit beta (475 aa).

An ATP-binding site is contributed by 154 to 161 (GGAGVGKT).

The protein belongs to the ATPase alpha/beta chains family. In terms of assembly, F-type ATPases have 2 components, CF(1) - the catalytic core - and CF(0) - the membrane proton channel. CF(1) has five subunits: alpha(3), beta(3), gamma(1), delta(1), epsilon(1). CF(0) has three main subunits: a(1), b(2) and c(9-12). The alpha and beta chains form an alternating ring which encloses part of the gamma chain. CF(1) is attached to CF(0) by a central stalk formed by the gamma and epsilon chains, while a peripheral stalk is formed by the delta and b chains.

Its subcellular location is the cell inner membrane. The catalysed reaction is ATP + H2O + 4 H(+)(in) = ADP + phosphate + 5 H(+)(out). In terms of biological role, produces ATP from ADP in the presence of a proton gradient across the membrane. The catalytic sites are hosted primarily by the beta subunits. This chain is ATP synthase subunit beta, found in Hyphomonas neptunium (strain ATCC 15444).